The following is a 413-amino-acid chain: Serine hydroxymethyltransferase (413 aa).

(6S)-5,6,7,8-tetrahydrofolate contacts are provided by residues Leu115 and Gly119–Leu121. At Lys224 the chain carries N6-(pyridoxal phosphate)lysine.

Belongs to the SHMT family. In terms of assembly, homodimer. Requires pyridoxal 5'-phosphate as cofactor.

It is found in the cytoplasm. The catalysed reaction is (6R)-5,10-methylene-5,6,7,8-tetrahydrofolate + glycine + H2O = (6S)-5,6,7,8-tetrahydrofolate + L-serine. It functions in the pathway one-carbon metabolism; tetrahydrofolate interconversion. The protein operates within amino-acid biosynthesis; glycine biosynthesis; glycine from L-serine: step 1/1. Functionally, catalyzes the reversible interconversion of serine and glycine with tetrahydrofolate (THF) serving as the one-carbon carrier. This reaction serves as the major source of one-carbon groups required for the biosynthesis of purines, thymidylate, methionine, and other important biomolecules. Also exhibits THF-independent aldolase activity toward beta-hydroxyamino acids, producing glycine and aldehydes, via a retro-aldol mechanism. This is Serine hydroxymethyltransferase from Mycoplasma mycoides subsp. mycoides SC (strain CCUG 32753 / NCTC 10114 / PG1).